The sequence spans 1028 residues: Receptor-type guanylate cyclase gcy-13 (1028 aa).

Residues N58, N156, N324, N337, N377, and N394 are each glycosylated (N-linked (GlcNAc...) asparagine). Residues 438–458 (IVVIVAVIIVLCCAAAAIAAF) traverse the membrane as a helical segment. The Cytoplasmic segment spans residues 459 to 1028 (LVIKARRDEE…WLLGMKEESA (570 aa)). Positions 491–511 (ESHHSSRSLQSNSTTTTGTTG) are disordered. Positions 497-511 (RSLQSNSTTTTGTTG) are enriched in low complexity. The Protein kinase domain maps to 499-770 (LQSNSTTTTG…DMVNKLMKNM (272 aa)). A coiled-coil region spans residues 786 to 817 (SVLEKHASSLEDEVQERMKELVEEKKKSDILL). The Guanylate cyclase domain occupies 844–974 (TIFFSDVVGF…DTVNTASRME (131 aa)).

This sequence belongs to the adenylyl cyclase class-4/guanylyl cyclase family. Expressed bilaterally in RIM interneurons.

It is found in the cell membrane. It catalyses the reaction GTP = 3',5'-cyclic GMP + diphosphate. Its function is as follows. Guanylate cyclase involved in the production of the second messenger cGMP. The polypeptide is Receptor-type guanylate cyclase gcy-13 (Caenorhabditis elegans).